A 376-amino-acid chain; its full sequence is N-acetyldiaminopimelate deacetylase (376 aa).

The active site involves Asp-69. The active-site Proton acceptor is the Glu-128.

It belongs to the peptidase M20A family. N-acetyldiaminopimelate deacetylase subfamily.

The enzyme catalyses N-acetyl-(2S,6S)-2,6-diaminopimelate + H2O = (2S,6S)-2,6-diaminopimelate + acetate. It participates in amino-acid biosynthesis; L-lysine biosynthesis via DAP pathway; LL-2,6-diaminopimelate from (S)-tetrahydrodipicolinate (acetylase route): step 3/3. Functionally, catalyzes the conversion of N-acetyl-diaminopimelate to diaminopimelate and acetate. This Streptococcus pneumoniae (strain CGSP14) protein is N-acetyldiaminopimelate deacetylase.